Here is a 282-residue protein sequence, read N- to C-terminus: Tetraspanin-6 (282 aa).

Residues Met-1–Thr-7 lie on the Cytoplasmic side of the membrane. A helical membrane pass occupies residues Val-8–Leu-28. The Extracellular portion of the chain corresponds to Tyr-29–Pro-44. Residues Leu-45–Phe-65 form a helical membrane-spanning segment. Residues Asn-66–Tyr-74 lie on the Cytoplasmic side of the membrane. A helical transmembrane segment spans residues Leu-75–Val-95. The Extracellular segment spans residues Thr-96 to Ser-220. A helical membrane pass occupies residues Val-221 to Phe-241. Residues His-242 to Tyr-282 lie on the Cytoplasmic side of the membrane.

Belongs to the tetraspanin (TM4SF) family.

The protein resides in the membrane. In terms of biological role, may be involved in the regulation of cell differentiation. The sequence is that of Tetraspanin-6 (TET6) from Arabidopsis thaliana (Mouse-ear cress).